Here is a 509-residue protein sequence, read N- to C-terminus: DEAD-box ATP-dependent RNA helicase CshA (509 aa).

Residues 2–30 (QNFKELGISDKTVQTLEAMGFKEPTPIQK) carry the Q motif motif. The Helicase ATP-binding domain maps to 33–203 (IPYALEGDDI…QQFMKAPKII (171 aa)). 46 to 53 (AQTGTGKT) is a binding site for ATP. The DEAD box motif lies at 150 to 153 (DEAD). In terms of domain architecture, Helicase C-terminal spans 214-375 (QIDEYYTIVK…LRPPHRKEVL (162 aa)). Composition is skewed to basic residues over residues 440 to 459 (ARKN…KRGN) and 467 to 482 (RRSK…KKNQ). The interval 440–509 (ARKNRSSKGG…KGRTFADHQK (70 aa)) is disordered. Residues 483-492 (KKFDRRDKQQ) are compositionally biased toward basic and acidic residues.

The protein belongs to the DEAD box helicase family. CshA subfamily. As to quaternary structure, oligomerizes, may be a member of the RNA degradosome.

The protein resides in the cytoplasm. The catalysed reaction is ATP + H2O = ADP + phosphate + H(+). Its function is as follows. DEAD-box RNA helicase possibly involved in RNA degradation. Unwinds dsRNA in both 5'- and 3'-directions, has RNA-dependent ATPase activity. This Staphylococcus epidermidis (strain ATCC 35984 / DSM 28319 / BCRC 17069 / CCUG 31568 / BM 3577 / RP62A) protein is DEAD-box ATP-dependent RNA helicase CshA.